The sequence spans 406 residues: MAFLTAVLYLGFACISQGLPTWPDRVESRNPLFGSRVALNLPSLLDGNRHHRDMRYPLYMMQLYQNLVTGNDTGLANRPNTATKEYDTVLSLFAKKCTESENRWTLSFDMSAVSRSNELKLAELRILLPHTEPSHNITMDMYHSRDGEDNLYLGSFNANPPSTKGSPWKVFNVTKILQPYFKERRDIDSEHLKAKERAERGSGMSNAEFIDAPGPSQQYNPHQTSVPTYLNTKGVMLVLFTKVKSSANHIGFPSLIKTAESSKYVDIEKASRVPGIRRHRRNRNENHHLSIGSIPSRHVENGKPLCRRVDMIVDFEDIGWSSWIVYPKKYNAYRCEGACPIPLNETFKPTNHAYMKSVVKLYQPERVECPLCVPVKMSPLSMLYYEGDEVVLRHHQEMIVEECGCS.

An N-terminal signal peptide occupies residues 1 to 18 (MAFLTAVLYLGFACISQG). A propeptide spanning residues 19–281 (LPTWPDRVES…RVPGIRRHRR (263 aa)) is cleaved from the precursor. N-linked (GlcNAc...) asparagine glycosylation is found at asparagine 71, asparagine 136, and asparagine 172. Positions 195-222 (KERAERGSGMSNAEFIDAPGPSQQYNPH) are disordered. Disulfide bonds link cysteine 306-cysteine 372, cysteine 335-cysteine 403, and cysteine 339-cysteine 405. Residue asparagine 344 is glycosylated (N-linked (GlcNAc...) asparagine).

It belongs to the TGF-beta family. As to quaternary structure, homodimer; disulfide-linked. Interacts with, and is inhibited by cer1 and gdf10/bmp3b. As to expression, in the first phase of expression, localized to the vegetal region of the blastula. During gastrulation (stage 10.5), this expression disappears and instead becomes localized to the dorsal marginal zone, with enrichment in the organizer. During the second phase of expression in neurulae and tailbud embryos, expression restarts firstly in two symmetric patches near the posterior end of the notochord, and then in a large asymmetrical domain in the left lateral plate mesoderm.

It is found in the secreted. Functionally, cooperation and regulatory loops of multiple nodals are essential for mesendoderm patterning in early embryos. Essential for mesoderm formation and axial patterning during embryonic development. Activates the activin-like signaling pathway to induce dorsal and ventral mesoderm in animal cap ectoderm. In addition, also dorsalizes ventral marginal zone (VMZ) tissues during gastrulation. Acts in a downstream signaling cascade via cripto and cer1 to mediate cardiogenesis in embryonic mesoderm. Directs the orientation of the left-right axis by driving the left-specific gene cascade in the left lateral plate mesoderm. This Xenopus laevis (African clawed frog) protein is Nodal homolog.